Consider the following 293-residue polypeptide: Dioxygenase cdmA (293 aa).

3 residues coordinate Fe cation: His-135, Asp-137, and His-212.

Belongs to the PhyH family. Homodimer. Fe cation is required as a cofactor.

It catalyses the reaction chrodrimanin C + 2-oxoglutarate + O2 = verruculide A + succinate + CO2 + H2O. It carries out the reaction chrodrimanin H + 2-oxoglutarate + O2 = chrodrimanin E + succinate + CO2 + H2O. It functions in the pathway secondary metabolite biosynthesis; terpenoid biosynthesis. In terms of biological role, dioxygenase; part of the gene cluster that mediates the biosynthesis of chrodrimanin B, a meroterpenoid that acts as a potent blocker of insect GABA-gated chloride channels. The first step of the pathway is the biosynthesis of 6-hydroxymellein by the polyketide synthase cdmE. The prenyltransferase cdmH acts as a 6-hydroxymellein 5-farnesyltransferase and produces the hydrophobic metabolite verruculide C. The FAD-dependent monooxygenase cdmI further converts verruculide C into verruculide B. The terpene cyclase cdmG then produced the pentacyclic molecule 3-hydroxypentacecilide A, the backbone structure of chrodrimanin B, via folding the farnesyl moiety of the substrate into the chair-boat conformation. The short-chain dehydrogenase/reductase cdmF functions as the 3-OH dehydrogenase that oxidizes the C-3 hydroxyl group of 3-hydroxypentacecilide A and produces chrodrimanin C, the dehydrogenated product of 3-hydroxypentacecilide A. The cytochrome P450 monooxygenase cdmJ then accepts both 3-hydroxypentacecilide A and chrodrimanin C and functions as a C-7-beta-hydroxylase to produce respectively chrodrimanin H and chrodrimanin F. The dioxygenase cdmA accepts chrodrimanin H to afford chrodrimanin E, which is further transformed to chrodrimanin A by the dioxygenase cdmD. CdmA can also accept chrodrimanin C as substrate to convert it into verruculide A, which is further converted into chrodrimanin T by cdmD. The last step of the biosynthesis is proposed to be performed by the acetyltransferase cdmC which acetylates chrodrimanin A to yield chrodrimanin B. The pathway may also lead to the production of additional shunt products, including chrodrimanins T and U. The polypeptide is Dioxygenase cdmA (Talaromyces verruculosus (Penicillium verruculosum)).